The following is a 360-amino-acid chain: Dihydroorotate dehydrogenase (quinone) (360 aa).

FMN is bound by residues 65–69 (AGLDK) and Thr89. Lys69 is a binding site for substrate. Residue 114-118 (NRLGF) participates in substrate binding. Asn147 and Asn180 together coordinate FMN. Asn180 is a binding site for substrate. Ser183 (nucleophile) is an active-site residue. A substrate-binding site is contributed by Asn185. Positions 225 and 253 each coordinate FMN. A substrate-binding site is contributed by 254-255 (NT). Residues Gly276, Gly305, and 326 to 327 (YT) contribute to the FMN site.

Belongs to the dihydroorotate dehydrogenase family. Type 2 subfamily. As to quaternary structure, monomer. Requires FMN as cofactor.

It localises to the cell membrane. It catalyses the reaction (S)-dihydroorotate + a quinone = orotate + a quinol. It participates in pyrimidine metabolism; UMP biosynthesis via de novo pathway; orotate from (S)-dihydroorotate (quinone route): step 1/1. Its function is as follows. Catalyzes the conversion of dihydroorotate to orotate with quinone as electron acceptor. This chain is Dihydroorotate dehydrogenase (quinone), found in Verminephrobacter eiseniae (strain EF01-2).